We begin with the raw amino-acid sequence, 335 residues long: UPF0324 membrane protein gbs1193 (335 aa).

Transmembrane regions (helical) follow at residues 20 to 42 (SWLL…IGII), 57 to 79 (IAFT…LNLM), 84 to 106 (VGIS…AYVL), 116 to 138 (IATL…TAPV), 151 to 173 (SVIF…FIGL), 210 to 232 (GATI…LSIY), 253 to 275 (VLYF…SLRI), 285 to 304 (FFIV…SKLI), and 311 to 333 (ILLG…AILG).

The protein belongs to the UPF0324 family.

The protein resides in the cell membrane. This chain is UPF0324 membrane protein gbs1193, found in Streptococcus agalactiae serotype III (strain NEM316).